The chain runs to 658 residues: Integrator complex subunit 9 (658 aa).

Residue lysine 58 forms a Glycyl lysine isopeptide (Lys-Gly) (interchain with G-Cter in SUMO2) linkage. Residues 548-572 (DNKHVLQPPPKPTQPTSSKKRKRVN) form a disordered region. Positions 566 to 570 (KKRKR) match the Nuclear localization signal motif.

It belongs to the metallo-beta-lactamase superfamily. RNA-metabolizing metallo-beta-lactamase-like family. INTS9 subfamily. Component of the Integrator complex, composed of core subunits INTS1, INTS2, INTS3, INTS4, INTS5, INTS6, INTS7, INTS8, INTS9/RC74, INTS10, INTS11/CPSF3L, INTS12, INTS13, INTS14 and INTS15. The core complex associates with protein phosphatase 2A subunits PPP2CA and PPP2R1A, to form the Integrator-PP2A (INTAC) complex. INTS9 is part of the RNA endonuclease subcomplex, composed of INTS4, INTS9, INTS11 and inositol hexakisphosphate (InsP6). Interacts with WDR73; interaction is required for the assembly of the RNA endonuclease subcomplex in the cytoplasm. Interacts with BRAT1; interaction is required for the assembly of the RNA endonuclease subcomplex. Interacts with ESRRB, ESRRB is not a core component of the Integrator complex and this association is a bridge for the interaction with the multiprotein complex Integrator; attracts the transcriptional machinery.

The protein resides in the nucleus. It is found in the cytoplasm. Functionally, component of the integrator complex, a multiprotein complex that terminates RNA polymerase II (Pol II) transcription in the promoter-proximal region of genes. The integrator complex provides a quality checkpoint during transcription elongation by driving premature transcription termination of transcripts that are unfavorably configured for transcriptional elongation: the complex terminates transcription by (1) catalyzing dephosphorylation of the C-terminal domain (CTD) of Pol II subunit POLR2A/RPB1 and SUPT5H/SPT5, (2) degrading the exiting nascent RNA transcript via endonuclease activity and (3) promoting the release of Pol II from bound DNA. The integrator complex is also involved in terminating the synthesis of non-coding Pol II transcripts, such as enhancer RNAs (eRNAs), small nuclear RNAs (snRNAs), telomerase RNAs and long non-coding RNAs (lncRNAs). Mediates recruitment of cytoplasmic dynein to the nuclear envelope, probably as component of the integrator complex. This chain is Integrator complex subunit 9 (Ints9), found in Mus musculus (Mouse).